The primary structure comprises 153 residues: Transcriptional repressor NrdR (153 aa).

The segment at 3 to 34 (CPSCFHNGTRVLDSRPVDEGRSIRRRRECESC) is a zinc-finger region. Residues 49 to 139 (LIVVKKEGTR…VYRQFKDLNV (91 aa)) enclose the ATP-cone domain.

This sequence belongs to the NrdR family. Zn(2+) is required as a cofactor.

Its function is as follows. Negatively regulates transcription of bacterial ribonucleotide reductase nrd genes and operons by binding to NrdR-boxes. This chain is Transcriptional repressor NrdR, found in Bacillus mycoides (strain KBAB4) (Bacillus weihenstephanensis).